Here is a 311-residue protein sequence, read N- to C-terminus: Dehydrogenase/reductase SDR family member 7C (311 aa).

An N-terminal signal peptide occupies residues 1–18; the sequence is MGFLTFLIVPLLILGISG. 41–65 contributes to the NAD(+) binding site; it reads VITDAISGLGKECSRVFHSAGARLV. Thr-178 contributes to the substrate binding site. The Proton acceptor role is filled by Tyr-191.

This sequence belongs to the short-chain dehydrogenases/reductases (SDR) family.

The protein localises to the secreted. Its function is as follows. Putative oxidoreductase. The polypeptide is Dehydrogenase/reductase SDR family member 7C (dhrs7c) (Xenopus tropicalis (Western clawed frog)).